The sequence spans 130 residues: Small ribosomal subunit protein bS6 (130 aa).

The segment at 100–130 (SPMVKAKDERRERREDFAEAGDDVDAGDSEE) is disordered. Residues 104-116 (KAKDERRERREDF) are compositionally biased toward basic and acidic residues. Positions 117-130 (AEAGDDVDAGDSEE) are enriched in acidic residues.

Belongs to the bacterial ribosomal protein bS6 family.

Its function is as follows. Binds together with bS18 to 16S ribosomal RNA. The polypeptide is Small ribosomal subunit protein bS6 (Pectobacterium carotovorum subsp. carotovorum (strain PC1)).